Here is an 88-residue protein sequence, read N- to C-terminus: UPF0297 protein Cphy_2298 (88 aa).

Belongs to the UPF0297 family.

The polypeptide is UPF0297 protein Cphy_2298 (Lachnoclostridium phytofermentans (strain ATCC 700394 / DSM 18823 / ISDg) (Clostridium phytofermentans)).